Consider the following 225-residue polypeptide: Putative N-acetylmannosamine-6-phosphate 2-epimerase (225 aa).

This sequence belongs to the NanE family.

The catalysed reaction is an N-acyl-D-glucosamine 6-phosphate = an N-acyl-D-mannosamine 6-phosphate. The protein operates within amino-sugar metabolism; N-acetylneuraminate degradation; D-fructose 6-phosphate from N-acetylneuraminate: step 3/5. Its function is as follows. Converts N-acetylmannosamine-6-phosphate (ManNAc-6-P) to N-acetylglucosamine-6-phosphate (GlcNAc-6-P). This Vibrio vulnificus (strain CMCP6) protein is Putative N-acetylmannosamine-6-phosphate 2-epimerase.